Consider the following 1059-residue polypeptide: Carbamoyl phosphate synthase large chain (1059 aa).

The segment at 1–401 (MPKRKDIQKV…AMLKAVRSLE (401 aa)) is carboxyphosphate synthetic domain. ATP contacts are provided by arginine 129, arginine 169, glycine 175, glycine 176, arginine 208, isoleucine 210, glutamate 215, glycine 241, valine 242, histidine 243, glutamine 284, and glutamate 298. An ATP-grasp 1 domain is found at 133-327 (KALMERLNEP…IAKMAAKIAV (195 aa)). Positions 284, 298, and 300 each coordinate Mg(2+). Glutamine 284, glutamate 298, and asparagine 300 together coordinate Mn(2+). An oligomerization domain region spans residues 402 to 546 (IGVTGLNDLT…YATYERENES (145 aa)). The carbamoyl phosphate synthetic domain stretch occupies residues 547 to 929 (VRSKKPSVIV…ALYKAFVASN (383 aa)). The ATP-grasp 2 domain occupies 671-861 (DQVIKTLALP…LAQLATRVML (191 aa)). ATP contacts are provided by arginine 707, serine 746, leucine 748, glutamate 752, glycine 777, valine 778, histidine 779, serine 780, glutamine 820, and glutamate 832. Positions 820, 832, and 834 each coordinate Mg(2+). Mn(2+) is bound by residues glutamine 820, glutamate 832, and asparagine 834. In terms of domain architecture, MGS-like spans 930-1059 (IKVPQYGNVL…SRSFTVNEMK (130 aa)). The segment at 930 to 1059 (IKVPQYGNVL…SRSFTVNEMK (130 aa)) is allosteric domain.

The protein belongs to the CarB family. As to quaternary structure, composed of two chains; the small (or glutamine) chain promotes the hydrolysis of glutamine to ammonia, which is used by the large (or ammonia) chain to synthesize carbamoyl phosphate. Tetramer of heterodimers (alpha,beta)4. Requires Mg(2+) as cofactor. Mn(2+) is required as a cofactor.

The catalysed reaction is hydrogencarbonate + L-glutamine + 2 ATP + H2O = carbamoyl phosphate + L-glutamate + 2 ADP + phosphate + 2 H(+). It catalyses the reaction hydrogencarbonate + NH4(+) + 2 ATP = carbamoyl phosphate + 2 ADP + phosphate + 2 H(+). Its pathway is amino-acid biosynthesis; L-arginine biosynthesis; carbamoyl phosphate from bicarbonate: step 1/1. It participates in pyrimidine metabolism; UMP biosynthesis via de novo pathway; (S)-dihydroorotate from bicarbonate: step 1/3. Functionally, large subunit of the glutamine-dependent carbamoyl phosphate synthetase (CPSase). CPSase catalyzes the formation of carbamoyl phosphate from the ammonia moiety of glutamine, carbonate, and phosphate donated by ATP, constituting the first step of 2 biosynthetic pathways, one leading to arginine and/or urea and the other to pyrimidine nucleotides. The large subunit (synthetase) binds the substrates ammonia (free or transferred from glutamine from the small subunit), hydrogencarbonate and ATP and carries out an ATP-coupled ligase reaction, activating hydrogencarbonate by forming carboxy phosphate which reacts with ammonia to form carbamoyl phosphate. In Leuconostoc citreum (strain KM20), this protein is Carbamoyl phosphate synthase large chain.